A 62-amino-acid chain; its full sequence is Translational regulator CsrA 3 (62 aa).

The protein belongs to the CsrA/RsmA family. As to quaternary structure, homodimer; the beta-strands of each monomer intercalate to form a hydrophobic core, while the alpha-helices form wings that extend away from the core.

It is found in the cytoplasm. In terms of biological role, a key translational regulator that binds mRNA to regulate translation initiation and/or mRNA stability. Mediates global changes in gene expression, shifting from rapid growth to stress survival by linking envelope stress, the stringent response and the catabolite repression systems. Usually binds in the 5'-UTR; binding at or near the Shine-Dalgarno sequence prevents ribosome-binding, repressing translation, binding elsewhere in the 5'-UTR can activate translation and/or stabilize the mRNA. Its function is antagonized by small RNA(s). This Pseudomonas syringae pv. tomato (strain ATCC BAA-871 / DC3000) protein is Translational regulator CsrA 3.